Reading from the N-terminus, the 527-residue chain is Probable protein kinase UbiB (527 aa).

Residues aspartate 118–glycine 501 enclose the Protein kinase domain. Residues valine 124–valine 132 and lysine 150 contribute to the ATP site. The active-site Proton acceptor is the aspartate 285. Residues leucine 502–isoleucine 522 form a helical membrane-spanning segment.

The protein belongs to the ABC1 family. UbiB subfamily.

It localises to the cell inner membrane. It functions in the pathway cofactor biosynthesis; ubiquinone biosynthesis [regulation]. Functionally, is probably a protein kinase regulator of UbiI activity which is involved in aerobic coenzyme Q (ubiquinone) biosynthesis. The sequence is that of Probable protein kinase UbiB from Paraburkholderia phymatum (strain DSM 17167 / CIP 108236 / LMG 21445 / STM815) (Burkholderia phymatum).